The primary structure comprises 186 residues: MQLDNQNLIWIDLEMTGLDPENERIIEIATIVTDKDLNILAEGPVLAVHQSDELLAKMSDWCIKTHSANGLVDRVKASKLTERAAELQTIDFLKKWVPKGASPICGNSVAQDKRFLFKYMPELADYFHYRHLDVSTLKELARRWKPELLNGFEKKNTHLALDDIRESIAELAYYRDHFIKLDGDQK.

The 164-residue stretch at 8 to 171 (LIWIDLEMTG…DDIRESIAEL (164 aa)) folds into the Exonuclease domain. The active site involves Tyr129.

Belongs to the oligoribonuclease family.

The protein localises to the cytoplasm. Functionally, 3'-to-5' exoribonuclease specific for small oligoribonucleotides. This is Oligoribonuclease from Mannheimia succiniciproducens (strain KCTC 0769BP / MBEL55E).